The chain runs to 364 residues: Protein IncC (364 aa).

Composition is skewed to basic and acidic residues over residues 1–10 (MGVIHEETAY), 26–42 (ADHR…EATG), and 89–100 (HRPEVGSGRQEK). 2 disordered regions span residues 1 to 63 (MGVI…ASRV) and 75 to 102 (VRAG…EKTG).

The protein belongs to the ParA family.

In terms of biological role, this is one of the proteins encoded by the trfB operon; it is involved in plasmid maintenance and replication. In Escherichia coli, this protein is Protein IncC (incC).